Consider the following 713-residue polypeptide: BBSome complex assembly protein BBS10 (713 aa).

The protein belongs to the TCP-1 chaperonin family. Component of a complex composed at least of MKKS, BBS10, BBS12, TCP1, CCT2, CCT3, CCT4, CCT5 and CCT8.

The protein localises to the cell projection. It is found in the cilium. In terms of biological role, probable molecular chaperone that assists the folding of proteins upon ATP hydrolysis. Plays a role in the assembly of BBSome, a complex involved in ciliogenesis regulating transports vesicles to the cilia. Involved in adipogenic differentiation. The polypeptide is BBSome complex assembly protein BBS10 (Bbs10) (Mus musculus (Mouse)).